We begin with the raw amino-acid sequence, 70 residues long: Small ribosomal subunit protein bS21 (70 aa).

It belongs to the bacterial ribosomal protein bS21 family.

This Albidiferax ferrireducens (strain ATCC BAA-621 / DSM 15236 / T118) (Rhodoferax ferrireducens) protein is Small ribosomal subunit protein bS21.